The chain runs to 123 residues: Guanine nucleotide exchange factor MSS4 (123 aa).

Position 1 is an N-acetylmethionine (methionine 1). Residues 9–123 (ELVSAEGRNR…YVALERVSHE (115 aa)) enclose the MSS4 domain. Zn(2+) is bound by residues cysteine 23, cysteine 26, cysteine 94, and cysteine 97.

Belongs to the DSS4/MSS4 family. As to quaternary structure, interacts with RAB8A. In terms of tissue distribution, ubiquitous.

In terms of biological role, guanine-nucleotide-releasing protein that acts on members of the SEC4/YPT1/RAB subfamily. Stimulates GDP release from both YPT1, RAB3A and RAB10, but is less active on these proteins than on the SEC4 protein. Might play a general role in vesicular transport. The sequence is that of Guanine nucleotide exchange factor MSS4 (RABIF) from Homo sapiens (Human).